Consider the following 94-residue polypeptide: CRISPR-associated endoribonuclease Cas2 1 (94 aa).

Position 8 (Asp8) interacts with Mg(2+).

It belongs to the CRISPR-associated endoribonuclease Cas2 protein family. In terms of assembly, homodimer, forms a heterotetramer with a Cas1 homodimer. Mg(2+) serves as cofactor.

Its function is as follows. CRISPR (clustered regularly interspaced short palindromic repeat), is an adaptive immune system that provides protection against mobile genetic elements (viruses, transposable elements and conjugative plasmids). CRISPR clusters contain sequences complementary to antecedent mobile elements and target invading nucleic acids. CRISPR clusters are transcribed and processed into CRISPR RNA (crRNA). Functions as a ssRNA-specific endoribonuclease. Involved in the integration of spacer DNA into the CRISPR cassette. The chain is CRISPR-associated endoribonuclease Cas2 1 from Synechocystis sp. (strain ATCC 27184 / PCC 6803 / Kazusa).